Consider the following 378-residue polypeptide: Heat-inducible transcription repressor HrcA (378 aa).

Belongs to the HrcA family.

Negative regulator of class I heat shock genes (grpE-dnaK-dnaJ and groELS operons). Prevents heat-shock induction of these operons. This chain is Heat-inducible transcription repressor HrcA, found in Synechocystis sp. (strain ATCC 27184 / PCC 6803 / Kazusa).